A 449-amino-acid chain; its full sequence is mRNA-capping enzyme subunit alpha (449 aa).

Residue K66 is the N6-GMP-lysine intermediate of the active site. Residues 405–449 form a disordered region; that stretch reads DERKNGAYQHHSSSFSESRQQPKAEPVAEKKQTEPKYVDDDDWSD. A compositionally biased stretch (polar residues) spans 414 to 423; it reads HHSSSFSESR. Basic and acidic residues predominate over residues 424–442; sequence QQPKAEPVAEKKQTEPKYV.

This sequence belongs to the eukaryotic GTase family. In terms of assembly, heterodimer. The mRNA-capping enzyme is composed of two separate chains alpha and beta, respectively a mRNA guanylyltransferase and an mRNA 5'-triphosphate monophosphatase.

It is found in the nucleus. The catalysed reaction is a 5'-end diphospho-ribonucleoside in mRNA + GTP + H(+) = a 5'-end (5'-triphosphoguanosine)-ribonucleoside in mRNA + diphosphate. Its function is as follows. Second step of mRNA capping. Transfer of the GMP moiety of GTP to the 5'-end of RNA via an enzyme-GMP covalent reaction intermediate. The protein is mRNA-capping enzyme subunit alpha (CEG1) of Candida glabrata (strain ATCC 2001 / BCRC 20586 / JCM 3761 / NBRC 0622 / NRRL Y-65 / CBS 138) (Yeast).